Consider the following 246-residue polypeptide: DNA polymerase sliding clamp (246 aa).

Belongs to the PCNA family. In terms of assembly, homotrimer. The subunits circularize to form a toroid; DNA passes through its center. Replication factor C (RFC) is required to load the toroid on the DNA.

Functionally, sliding clamp subunit that acts as a moving platform for DNA processing. Responsible for tethering the catalytic subunit of DNA polymerase and other proteins to DNA during high-speed replication. The chain is DNA polymerase sliding clamp from Thermoplasma volcanium (strain ATCC 51530 / DSM 4299 / JCM 9571 / NBRC 15438 / GSS1).